A 151-amino-acid chain; its full sequence is Probable transport accessory protein MmpS1 (151 aa).

The next 2 membrane-spanning stretches (helical) occupy residues 8 to 28 and 81 to 101; these read FWIPMVIVIVVAVAAVTVSRL and VVNAAVPWSFTIVTTLTAVVA.

It belongs to the MmpS family.

Its subcellular location is the cell membrane. This Mycobacterium tuberculosis (strain CDC 1551 / Oshkosh) protein is Probable transport accessory protein MmpS1 (mmpS1).